The chain runs to 404 residues: Protrudin (404 aa).

The tract at residues 1-20 (MQTSEREGCGPEVSPSTVPE) is disordered. Over 1 to 66 (MQTSEREGCG…AGDGVRYLLR (66 aa)) the chain is Cytoplasmic. The sufficient for homooligomerization stretch occupies residues 1–92 (MQTSEREGCG…LFLTLNEGAW (92 aa)). Positions 1–205 (MQTSEREGCG…LYLLPLCWVL (205 aa)) are sufficient for localization to endoplasmic reticulum tubular network and for interactions with REEP1, REEP5, ATL1, ATL2, ATL3 and SPAST. The necessary for interaction with RAB11A and function in neurite outgrowth stretch occupies residues 51–64 (LEPLKDAGDGVRYL). Residues 67-87 (WQTPLCSLLTCLGLNVLFLTL) form a helical membrane-spanning segment. Residue asparagine 88 is a topological domain, lumenal. The helical transmembrane segment at 89-109 (EGAWYSVGALMISVPALLGYL) threads the bilayer. At 110–187 (QEGCQARLSE…NPAVSSQFYG (78 aa)) the chain is on the cytoplasmic side. The segment at residues 188–208 (ALLGTVCMLYLLPLCWVLALL) is an intramembrane region (helical). At 209 to 404 (NSTLFLGNVE…CASCNQTLSK (196 aa)) the chain is on the cytoplasmic side. The disordered stretch occupies residues 234–286 (MNPKQEESAFESPPPSDAGGKGALVDCTPAPTPTEDLTPGSVEEAEEAEPDEE). Residues 271-354 (TPGSVEEAEE…GCSATFSVLK (84 aa)) are necessary for interaction with KIF5A. A compositionally biased stretch (acidic residues) spans 276–286 (EEAEEAEPDEE). A necessary for interaction with VAPA region spans residues 286–292 (EFKDAIE). The segment at 337 to 403 (TNNYGSCTGC…VCASCNQTLS (67 aa)) adopts an FYVE-type zinc-finger fold. Zn(2+) contacts are provided by cysteine 343, cysteine 346, cysteine 359, cysteine 362, cysteine 367, cysteine 370, cysteine 395, and cysteine 398.

In terms of assembly, can form homooligomers (monomers, dimers and tetramers). Interacts with RAB11A (GDP-bound form); regulates RAB11A. Interacts with FKBP8; may negatively regulate ZFYVE27 phosphorylation. Interacts with VAPA (via MSP domain); may regulate ZFYVE27 retention in the endoplasmic reticulum and its function in cell projections formation. Interacts with VAPB (via MSP domain). Interacts with RAB11B (GDP-bound form), REEP1, REEP5, ATL1, ATL2, ATL3, SPAST, SURF4, KIF5A, KIF5B, KIF5C and RTN3. Phosphorylated. Phosphorylation is induced by NGF through the MAPK/ERK pathway and modulates interaction with RAB11A.

The protein localises to the recycling endosome membrane. It is found in the endoplasmic reticulum membrane. The protein resides in the cell projection. Its subcellular location is the growth cone membrane. Key regulator of RAB11-dependent vesicular trafficking during neurite extension through polarized membrane transport. Promotes axonal elongation and contributes to the establishment of neuronal cell polarity. Involved in nerve growth factor-induced neurite formation in VAPA-dependent manner. Contributes to both the formation and stabilization of the tubular ER network. Involved in ER morphogenesis by regulating the sheet-to-tubule balance and possibly the density of tubule interconnections. Acts as an adapter protein that facilitates the interaction of KIF5A with VAPA, VAPB, SURF4, RAB11A, RAB11B and RTN3 and the ZFYVE27-KIF5A complex contributes to the transport of these proteins in neurons. Can induce formation of neurite-like membrane protrusions in non-neuronal cells in a KIF5A/B-dependent manner. This is Protrudin (ZFYVE27) from Bos taurus (Bovine).